The sequence spans 874 residues: Valine--tRNA ligase (874 aa).

Polar residues predominate over residues 1-10 (MTENSQQQPP). The tract at residues 1–23 (MTENSQQQPPASEPELPTQYAPA) is disordered. The 'HIGH' region signature appears at 57–67 (PNVTGSLHLGH). Residues 531–535 (KMSKS) carry the 'KMSKS' region motif. Lys-534 is an ATP binding site. Residues 806–871 (IDIVAERKRL…ARIQAQLDRM (66 aa)) are a coiled coil.

The protein belongs to the class-I aminoacyl-tRNA synthetase family. ValS type 1 subfamily. As to quaternary structure, monomer.

It localises to the cytoplasm. It carries out the reaction tRNA(Val) + L-valine + ATP = L-valyl-tRNA(Val) + AMP + diphosphate. In terms of biological role, catalyzes the attachment of valine to tRNA(Val). As ValRS can inadvertently accommodate and process structurally similar amino acids such as threonine, to avoid such errors, it has a 'posttransfer' editing activity that hydrolyzes mischarged Thr-tRNA(Val) in a tRNA-dependent manner. This chain is Valine--tRNA ligase, found in Streptomyces avermitilis (strain ATCC 31267 / DSM 46492 / JCM 5070 / NBRC 14893 / NCIMB 12804 / NRRL 8165 / MA-4680).